The primary structure comprises 175 residues: Large ribosomal subunit protein uL10 (175 aa).

This sequence belongs to the universal ribosomal protein uL10 family. Part of the ribosomal stalk of the 50S ribosomal subunit. The N-terminus interacts with L11 and the large rRNA to form the base of the stalk. The C-terminus forms an elongated spine to which L12 dimers bind in a sequential fashion forming a multimeric L10(L12)X complex.

Forms part of the ribosomal stalk, playing a central role in the interaction of the ribosome with GTP-bound translation factors. This chain is Large ribosomal subunit protein uL10, found in Cupriavidus taiwanensis (strain DSM 17343 / BCRC 17206 / CCUG 44338 / CIP 107171 / LMG 19424 / R1) (Ralstonia taiwanensis (strain LMG 19424)).